The following is a 218-amino-acid chain: Protein-L-isoaspartate O-methyltransferase 1 (218 aa).

Serine 69 is an active-site residue.

It belongs to the methyltransferase superfamily. L-isoaspartyl/D-aspartyl protein methyltransferase family.

It is found in the cytoplasm. The catalysed reaction is [protein]-L-isoaspartate + S-adenosyl-L-methionine = [protein]-L-isoaspartate alpha-methyl ester + S-adenosyl-L-homocysteine. In terms of biological role, catalyzes the methyl esterification of L-isoaspartyl residues in peptides and proteins that result from spontaneous decomposition of normal L-aspartyl and L-asparaginyl residues. It plays a role in the repair and/or degradation of damaged proteins. The chain is Protein-L-isoaspartate O-methyltransferase 1 from Marinobacter nauticus (strain ATCC 700491 / DSM 11845 / VT8) (Marinobacter aquaeolei).